Reading from the N-terminus, the 291-residue chain is Mitochondrial fission factor (291 aa).

Topologically, residues Met1–Met271 are cytoplasmic. The residue at position 89 (Thr89) is a Phosphothreonine. The segment at Leu106 to Ala134 is disordered. Phosphoserine is present on residues Ser129, Ser131, and Ser146. Thr149 bears the Phosphothreonine mark. 4 positions are modified to phosphoserine: Ser151, Ser178, Ser182, and Ser244. Positions Val240 to Met271 form a coiled coil. Residues Val272 to Phe289 form a helical; Anchor for type IV membrane protein membrane-spanning segment. The Mitochondrial intermembrane segment spans residues Arg290 to Arg291.

It belongs to the Tango11 family. In terms of assembly, homodimer. Interacts with DNM1L. Interacts with C11orf65/MFI; the interaction inhibits MFF interaction with DNM1L.

Its subcellular location is the mitochondrion outer membrane. The protein localises to the peroxisome. It localises to the cytoplasmic vesicle. The protein resides in the secretory vesicle. It is found in the synaptic vesicle. Plays a role in mitochondrial and peroxisomal fission. Promotes the recruitment and association of the fission mediator dynamin-related protein 1 (DNM1L) to the mitochondrial surface. May be involved in regulation of synaptic vesicle membrane dynamics by recruitment of DNM1L to clathrin-containing vesicles. The sequence is that of Mitochondrial fission factor (Mff) from Mus musculus (Mouse).